The following is a 298-amino-acid chain: MPVDKNLRDLEPGIHTDLEGRLTYGGYLRLDQLLSAQQPLSEPAHHDEMLFIIQHQTSELWLKLLAHELRAAIVHLQRDEVWQCRKVLARSKQVLRQLTEQWSVLETLTPSEYMGFRDVLGPSSGFQSLQYRYIEFLLGNKNPQMLQVFAYDPAGQARLREVLEAPSLYEEFLRYLARFGHAIPQQYQARDWTAAHVADDTLRPVFERIYENTDRYWREYSLCEDLVDVETQFQLWRFRHMRTVMRVIGFKRGTGGSSGVGFLQQALALTFFPELFDVRTSVGVDNRPPQGSADAGKR.

Substrate is bound by residues 51-55, Y113, and R117; that span reads FIIQH. H240 serves as a coordination point for heme. Residue T254 coordinates substrate.

This sequence belongs to the tryptophan 2,3-dioxygenase family. As to quaternary structure, homotetramer. It depends on heme as a cofactor.

The enzyme catalyses L-tryptophan + O2 = N-formyl-L-kynurenine. It functions in the pathway amino-acid degradation; L-tryptophan degradation via kynurenine pathway; L-kynurenine from L-tryptophan: step 1/2. Its function is as follows. Heme-dependent dioxygenase that catalyzes the oxidative cleavage of the L-tryptophan (L-Trp) pyrrole ring and converts L-tryptophan to N-formyl-L-kynurenine. Catalyzes the oxidative cleavage of the indole moiety. This chain is Tryptophan 2,3-dioxygenase, found in Xanthomonas campestris pv. campestris (strain 8004).